The following is a 251-amino-acid chain: CDP-diacylglycerol pyrophosphatase (251 aa).

The helical transmembrane segment at 5-25 threads the bilayer; sequence GYFLLAVIVIVAAAGVGYWKF.

The protein belongs to the Cdh family.

Its subcellular location is the cell inner membrane. The enzyme catalyses a CDP-1,2-diacyl-sn-glycerol + H2O = a 1,2-diacyl-sn-glycero-3-phosphate + CMP + 2 H(+). Its pathway is phospholipid metabolism; CDP-diacylglycerol degradation; phosphatidate from CDP-diacylglycerol: step 1/1. This Salmonella paratyphi A (strain ATCC 9150 / SARB42) protein is CDP-diacylglycerol pyrophosphatase.